Reading from the N-terminus, the 346-residue chain is MEKNQKCATEQERFKARSGHGDGQRAEPRKTQTTTESDKDSGYSDVASECLSSVEQTDTEEGPTTSRWNVALKPSGKTPSQPQSLVVLKNLLVDQGSGPEPNASSWAVHPSIQLLQTSPQIVFFPPTVSSSKPSTCRKDTKYLPILKSYTKIAPHPSHRVSNISLPCARKRGPDERPHNQTKRQCSKGHSGSRKGMDAATLLDTGVQQGPVDQNVKESSVSAKNKELDMQLTTQNINSNEKGSRVASLDTQQNLLSAGQQNKSQRFQNTLDILHRSGLLSIAMKTKELARHNQATQSQLEKLQEQVQLYATAMSSNNPHDWQRLQDSLAEVVKGDTEDLSVREMDL.

The segment covering 1–42 has biased composition (basic and acidic residues); it reads MEKNQKCATEQERFKARSGHGDGQRAEPRKTQTTTESDKDSG. Disordered regions lie at residues 1–83 and 167–228; these read MEKN…SQPQ and CARK…KELD. Residues 50–68 show a composition bias toward polar residues; it reads CLSSVEQTDTEEGPTTSRW. Residues 179 to 192 show a composition bias toward basic residues; it reads NQTKRQCSKGHSGS. Residues 205 to 222 show a composition bias toward polar residues; the sequence is GVQQGPVDQNVKESSVSA. A coiled-coil region spans residues 283 to 315; sequence MKTKELARHNQATQSQLEKLQEQVQLYATAMSS.

It is found in the nucleus. The protein resides in the cytoplasm. Its subcellular location is the cytosol. In terms of biological role, transcriptional repressor which acts as a negative-feedback regulator of CLOCK-BMAL1 transcriptional activity in the circadian-clock mechanism. The physiological relevance of these observations is unsure. This is CLOCK-interacting pacemaker (cipc) from Xenopus laevis (African clawed frog).